We begin with the raw amino-acid sequence, 510 residues long: Pectinesterase 2 (510 aa).

The first 19 residues, 1–19 (MALRILITVSLVLFSLSHT), serve as a signal peptide directing secretion. 2 N-linked (GlcNAc...) asparagine glycosylation sites follow: Asn110 and Asn158. Residues Thr275 and Gln305 each coordinate substrate. Asp328 serves as the catalytic Proton donor. The cysteines at positions 342 and 362 are disulfide-linked. Catalysis depends on Asp349, which acts as the Nucleophile. 2 N-linked (GlcNAc...) asparagine glycosylation sites follow: Asn371 and Asn385. Substrate contacts are provided by Arg416 and Trp418.

In the N-terminal section; belongs to the PMEI family. This sequence in the C-terminal section; belongs to the pectinesterase family. As to expression, expressed at low levels in young leaves, young bark, young fruit, mature fruit vesicles, shoots and flower buds, young bark and juice vesicles. In both leaf and fruit abscission zones, and mature leaves, expression was initially undetectable but increased markedly following ethylene treatment.

It is found in the secreted. The protein localises to the cell wall. The enzyme catalyses [(1-&gt;4)-alpha-D-galacturonosyl methyl ester](n) + n H2O = [(1-&gt;4)-alpha-D-galacturonosyl](n) + n methanol + n H(+). Its pathway is glycan metabolism; pectin degradation; 2-dehydro-3-deoxy-D-gluconate from pectin: step 1/5. Functionally, acts in the modification of cell walls via demethylesterification of cell wall pectin. The protein is Pectinesterase 2 (PECS-2.1) of Citrus sinensis (Sweet orange).